Consider the following 142-residue polypeptide: Transcriptional regulator MraZ (142 aa).

SpoVT-AbrB domains follow at residues 5-47 and 76-119; these read EYPY…PLAS and ANKA…NPER.

This sequence belongs to the MraZ family. As to quaternary structure, forms oligomers.

It is found in the cytoplasm. It localises to the nucleoid. The polypeptide is Transcriptional regulator MraZ (Deinococcus geothermalis (strain DSM 11300 / CIP 105573 / AG-3a)).